We begin with the raw amino-acid sequence, 201 residues long: MLREIRPAIVLLLVLTAITGLAYPLAMTGIAGMLFPAQAQGSLIEKDGKVIGSALIGQEFKDDKYFHGRPSATLAPDPNDSTKTVSAPYNAANSGGSNLGPTSKALADRLKEDVDKLKAENPNAAVPVDLVTTSASGLDPDISPEAAQFQVPRVAKARNMPEEAVKQLVASNVQGRLLGLLGEPRVNVLALNLALDRAAAK.

A helical membrane pass occupies residues 7-27 (PAIVLLLVLTAITGLAYPLAM).

This sequence belongs to the KdpC family. The system is composed of three essential subunits: KdpA, KdpB and KdpC.

Its subcellular location is the cell inner membrane. Part of the high-affinity ATP-driven potassium transport (or Kdp) system, which catalyzes the hydrolysis of ATP coupled with the electrogenic transport of potassium into the cytoplasm. This subunit acts as a catalytic chaperone that increases the ATP-binding affinity of the ATP-hydrolyzing subunit KdpB by the formation of a transient KdpB/KdpC/ATP ternary complex. The polypeptide is Potassium-transporting ATPase KdpC subunit (Bradyrhizobium diazoefficiens (strain JCM 10833 / BCRC 13528 / IAM 13628 / NBRC 14792 / USDA 110)).